The primary structure comprises 339 residues: DNA-directed RNA polymerase subunit alpha (339 aa).

The interval 1 to 233 is alpha N-terminal domain (alpha-NTD); it reads MVREKVRIST…DLFIPFLHAE (233 aa). An alpha C-terminal domain (alpha-CTD) region spans residues 267-339; that stretch reads IALKSIFIDQ…FTINLPKNKF (73 aa).

This sequence belongs to the RNA polymerase alpha chain family. In plastids the minimal PEP RNA polymerase catalytic core is composed of four subunits: alpha, beta, beta', and beta''. When a (nuclear-encoded) sigma factor is associated with the core the holoenzyme is formed, which can initiate transcription.

The protein localises to the plastid. Its subcellular location is the chloroplast. It carries out the reaction RNA(n) + a ribonucleoside 5'-triphosphate = RNA(n+1) + diphosphate. DNA-dependent RNA polymerase catalyzes the transcription of DNA into RNA using the four ribonucleoside triphosphates as substrates. The chain is DNA-directed RNA polymerase subunit alpha from Populus alba (White poplar).